The following is a 288-amino-acid chain: Bifunctional protein FolD 2 (288 aa).

Residues glycine 166–serine 168 and serine 191 each bind NADP(+).

The protein belongs to the tetrahydrofolate dehydrogenase/cyclohydrolase family. Homodimer.

The enzyme catalyses (6R)-5,10-methylene-5,6,7,8-tetrahydrofolate + NADP(+) = (6R)-5,10-methenyltetrahydrofolate + NADPH. The catalysed reaction is (6R)-5,10-methenyltetrahydrofolate + H2O = (6R)-10-formyltetrahydrofolate + H(+). The protein operates within one-carbon metabolism; tetrahydrofolate interconversion. Its function is as follows. Catalyzes the oxidation of 5,10-methylenetetrahydrofolate to 5,10-methenyltetrahydrofolate and then the hydrolysis of 5,10-methenyltetrahydrofolate to 10-formyltetrahydrofolate. The protein is Bifunctional protein FolD 2 of Frankia alni (strain DSM 45986 / CECT 9034 / ACN14a).